A 310-amino-acid chain; its full sequence is Syndecan-1 (310 aa).

An N-terminal signal peptide occupies residues 1–22 (MRRAALWLWLCALALSLQPALP). The Extracellular segment spans residues 23-254 (QIVATNLPPE…GLLDRKEVLG (232 aa)). 2 disordered regions span residues 27–100 (TNLP…EGPK) and 114–212 (LTAR…QDFT). Residues 32 to 42 (EDQDGSGDDSD) show a composition bias toward acidic residues. The O-linked (Xyl...) (chondroitin sulfate) serine glycan is linked to Ser37. Residue Asn43 is glycosylated (N-linked (GlcNAc...) asparagine). O-linked (Xyl...) (heparan sulfate) serine glycosylation is found at Ser45 and Ser47. A compositionally biased stretch (polar residues) spans 55-75 (ITLSQQTPSTWKDTQLLTAIP). The segment covering 117–127 (REQEATPRPRE) has biased composition (basic and acidic residues). The span at 128-151 (TTQLPTTHLASTTTATTAQEPATS) shows a compositional bias: low complexity. The span at 153–164 (PHRDMQPGHHET) shows a compositional bias: basic and acidic residues. O-linked (Xyl...) (chondroitin sulfate) serine glycans are attached at residues Ser206 and Ser216. Residues 255–275 (GVIAGGLVGLIFAVCLVGFML) traverse the membrane as a helical segment. Topologically, residues 276–310 (YRMKKKDEGSYSLEEPKQANGGAYQKPTKQEEFYA) are cytoplasmic. Residues 284-310 (GSYSLEEPKQANGGAYQKPTKQEEFYA) are disordered. Position 285 is a phosphoserine (Ser285).

The protein belongs to the syndecan proteoglycan family. In terms of assembly, interacts with CDCP1. Interacts (via C-terminus) with TIAM1 (via PDZ domain). Interacts with MDK. Shedding is enhanced by a number of factors such as heparanase, thrombin or EGF. Also by stress and wound healing. PMA-mediated shedding is inhibited by TIMP3. In terms of tissue distribution, detected in placenta (at protein level). Detected in fibroblasts (at protein level).

The protein localises to the membrane. The protein resides in the secreted. It localises to the extracellular exosome. In terms of biological role, cell surface proteoglycan that contains both heparan sulfate and chondroitin sulfate and that links the cytoskeleton to the interstitial matrix. Regulates exosome biogenesis in concert with SDCBP and PDCD6IP. Able to induce its own expression in dental mesenchymal cells and also in the neighboring dental epithelial cells via an MSX1-mediated pathway. The chain is Syndecan-1 from Homo sapiens (Human).